A 544-amino-acid polypeptide reads, in one-letter code: Phosphoacetylglucosamine mutase (544 aa).

Catalysis depends on Ser-66, which acts as the Phosphoserine intermediate. Ser-66, Asp-290, Asp-292, and Asp-294 together coordinate Mg(2+). Substrate is bound by residues 387-389 (EAN), 512-516 (RASGT), and Arg-521.

The protein belongs to the phosphohexose mutase family. The cofactor is Mg(2+).

It carries out the reaction N-acetyl-alpha-D-glucosamine 1-phosphate = N-acetyl-D-glucosamine 6-phosphate. It participates in nucleotide-sugar biosynthesis; UDP-N-acetyl-alpha-D-glucosamine biosynthesis; N-acetyl-alpha-D-glucosamine 1-phosphate from alpha-D-glucosamine 6-phosphate (route I): step 2/2. Catalyzes the conversion of GlcNAc-6-P into GlcNAc-1-P during the synthesis of uridine diphosphate/UDP-GlcNAc, which is a biosynthetic precursor of chitin and also supplies the amino sugars for N-linked oligosaccharides of glycoproteins. In Candida albicans (Yeast), this protein is Phosphoacetylglucosamine mutase.